The following is a 224-amino-acid chain: Small ribosomal subunit protein uS3c (224 aa).

Residues 43–124 (IKNYIQKNRK…RLNIAIEKVK (82 aa)) form the KH type-2 domain.

This sequence belongs to the universal ribosomal protein uS3 family. Part of the 30S ribosomal subunit.

The protein localises to the plastid. It localises to the chloroplast. This chain is Small ribosomal subunit protein uS3c (rps3), found in Saccharum hybrid (Sugarcane).